Consider the following 337-residue polypeptide: MQITVLGAGAWGTAVAAQAALRHPTLLWGRDPAQMAEIAATRRNQRYLPDADLPARLVCSGDWDAALAHVSARAGTDADANGAGLVIVATPMAALREMLARIPQGLPTLWLCKGFEAGTGLLGHEIAREVAPQLACGVLSGPSFALEVARQQPTALVAASQHESVRDAAVRALHGASLRVYASDDPVGVEVGGAVKNVLAIATGIADGMGLGLNARAALITRGLAEMTRLGLALGARAETFMGLSGLGDLVLTATGDLSRNRRVGLRLADGQTLAQILAELGHVSEGVYSAGTVLERAGRLGVDMPITAAVVAVLQGGLAPRDAVAALMQREARAES.

Residues Trp-11, Arg-30, and Lys-113 each coordinate NADPH. Residues Lys-113, Gly-141, and Ser-143 each coordinate sn-glycerol 3-phosphate. Residue Ala-145 participates in NADPH binding. Sn-glycerol 3-phosphate contacts are provided by Lys-196, Asp-249, Ser-259, Arg-260, and Asn-261. Residue Lys-196 is the Proton acceptor of the active site. Arg-260 is a binding site for NADPH. Residues Val-284 and Glu-286 each coordinate NADPH.

This sequence belongs to the NAD-dependent glycerol-3-phosphate dehydrogenase family.

The protein localises to the cytoplasm. The catalysed reaction is sn-glycerol 3-phosphate + NAD(+) = dihydroxyacetone phosphate + NADH + H(+). It catalyses the reaction sn-glycerol 3-phosphate + NADP(+) = dihydroxyacetone phosphate + NADPH + H(+). It participates in membrane lipid metabolism; glycerophospholipid metabolism. Functionally, catalyzes the reduction of the glycolytic intermediate dihydroxyacetone phosphate (DHAP) to sn-glycerol 3-phosphate (G3P), the key precursor for phospholipid synthesis. The polypeptide is Glycerol-3-phosphate dehydrogenase [NAD(P)+] (Leptothrix cholodnii (strain ATCC 51168 / LMG 8142 / SP-6) (Leptothrix discophora (strain SP-6))).